We begin with the raw amino-acid sequence, 384 residues long: Protein Brevis radix-like 4 (384 aa).

Disordered stretches follow at residues Met1–Lys35 and Pro50–Glu78. In terms of domain architecture, BRX 1 spans Lys150–Asn205. 2 disordered regions span residues Phe214–Ser270 and Ser304–Ser325. Residues Arg221–Asp235 show a composition bias toward basic and acidic residues. Residues Tyr260 to Ser270 are compositionally biased toward polar residues. Residues Ser309–Glu318 show a composition bias toward basic and acidic residues. The BRX 2 domain occupies Asn329–Leu384.

This sequence belongs to the BRX family. As to expression, expressed in roots.

It localises to the nucleus. This Arabidopsis thaliana (Mouse-ear cress) protein is Protein Brevis radix-like 4 (BRXL4).